Consider the following 824-residue polypeptide: Phenylalanine--tRNA ligase beta subunit (824 aa).

Positions 39 to 153 (SEQAKNVVIG…NIPPIGSNAV (115 aa)) constitute a tRNA-binding domain. In terms of domain architecture, B5 spans 414-507 (KKSISVNLRM…RLIGYDNFDS (94 aa)). Mg(2+) is bound by residues D485, D491, E494, and E495. The 94-residue stretch at 730 to 823 (PTVPYMERDI…LKEKIKAELR (94 aa)) folds into the FDX-ACB domain.

It belongs to the phenylalanyl-tRNA synthetase beta subunit family. Type 1 subfamily. As to quaternary structure, tetramer of two alpha and two beta subunits. Mg(2+) is required as a cofactor.

The protein resides in the cytoplasm. The catalysed reaction is tRNA(Phe) + L-phenylalanine + ATP = L-phenylalanyl-tRNA(Phe) + AMP + diphosphate + H(+). In Prochlorococcus marinus (strain NATL2A), this protein is Phenylalanine--tRNA ligase beta subunit.